A 928-amino-acid polypeptide reads, in one-letter code: Retinoblastoma-associated protein (928 aa).

The segment at 1–42 (MPPKTPRKTAATAAAAAAEPPAPPPPPPPEEDPEQDSGPEDL) is disordered. P2 bears the N,N-dimethylproline mark. Residues 8 to 19 (KTAATAAAAAAE) show a composition bias toward low complexity. Over residues 29–39 (PEEDPEQDSGP) the composition is skewed to acidic residues. S37 bears the Phosphoserine mark. S249 is subject to Phosphoserine; by CDK1. T252 carries the post-translational modification Phosphothreonine; by CDK1. T356 bears the Phosphothreonine mark. The residue at position 373 (T373) is a Phosphothreonine; by CDK1. The segment at 373-579 (TPVRTVMNTI…FDLIKQSKDR (207 aa)) is domain A. The tract at residues 373-771 (TPVRTVMNTI…QRLKTNILQY (399 aa)) is pocket; binds T and E1A. S567 carries the post-translational modification Phosphoserine; by CDK2. Residues 580 to 639 (EGPTDHLESACPLNLPLQNNHTAADMYLSPVRSPKKKGSTTRVNSTANAETQATSAFQTQ) are spacer. S608 is modified (phosphoserine). The interval 610–632 (VRSPKKKGSTTRVNSTANAETQA) is disordered. The residue at position 612 (S612) is a Phosphoserine; by CHEK2 and CHEK1. The span at 619-632 (TTRVNSTANAETQA) shows a compositional bias: polar residues. The residue at position 624 (S624) is a Phosphoserine. Positions 640–771 (KPLKSTSLSL…QRLKTNILQY (132 aa)) are domain B. The interaction with LIMD1 stretch occupies residues 763–928 (RLKTNILQYA…SMDTSNKEEK (166 aa)). Residues 771 to 928 (YASTRPPTLS…SMDTSNKEEK (158 aa)) are domain C; mediates interaction with E4F1. Residues S780, S788, and S795 each carry the phosphoserine modification. S807 bears the Phosphoserine; by CDK1 and CDK3 mark. N6-methyllysine; by SMYD2 is present on K810. Position 811 is a phosphoserine; by CDK1 and CDK3 (S811). Residue T821 is modified to Phosphothreonine; by CDK6. Position 823 is a phosphothreonine (T823). T826 carries the phosphothreonine; by CDK4 modification. T841 is modified (phosphothreonine). S855 carries the post-translational modification Phosphoserine. N6-methyllysine; by SMYD2 is present on K860. The short motif at 860 to 876 (KRSAEGSNPPKPLKKLR) is the Bipartite nuclear localization signal element. Residues 860 to 928 (KRSAEGSNPP…SMDTSNKEEK (69 aa)) form a disordered region. N6-acetyllysine; by PCAF occurs at positions 873 and 874. Basic and acidic residues predominate over residues 915–928 (KMNDSMDTSNKEEK).

The protein belongs to the retinoblastoma protein (RB) family. As to quaternary structure, the hypophosphorylated form interacts with and sequesters the E2F1 transcription factor, thereby inhibiting E2F1 transcription. Interacts with heterodimeric E2F/DP transcription factor complexes containing TFDP1 and either E2F1, E2F3, E2F4 or E2F5, or TFDP2 and E2F4. Interacts (when hyperphosphorylated and hypophosphorylated) with PKP3; the interaction inhibits RB1 interaction with and repression of the transcription factor E2F1, potentially via sequestering RB1 to the cytoplasm. The unphosphorylated form interacts with EID1, ARID3B, KDM5A, SUV39H1, MJD2A/JHDM3A and THOC1. Interacts with the N-terminal domain of TAF1. Interacts with SNW1, ATAD5, AATF, DNMT1, LIN9, LMNA, KMT5B, KMT5C, PELP1, UHRF2 and TMPO-alpha. Interacts with GRIP1 and UBR4. Interacts with ARID4A and KDM5B. Interacts with E4F1 and LIMD1. Interacts with SMARCA4/BRG1 and HDAC1. Interacts with PSMA3 and USP4. Interacts (when methylated at Lys-860) with L3MBTL1. Interacts with CHEK2; phosphorylates RB1. Interacts with CDK1 and CDK2. Interacts with PRMT2. Interacts with CEBPA. P-TEFB complex interacts with RB1; promotes phosphorylation of RB1. Interacts with RBBP9; the interaction disrupts RB1 binding to E2F1. Interacts with KAT2B/PCAF and EP300/P300. Interacts with PAX5. Interacts (phosphorylated and unphosphorylated) with BLCAP. May interact with NDC80. In terms of assembly, (Microbial infection) Interacts with adenovirus E1A protein. (Microbial infection) Interacts with HPV E7 protein. As to quaternary structure, (Microbial infection) Interacts with SV40 large T antigen. In terms of assembly, (Microbial infection) Interacts with human cytomegalovirus/HHV-5 proteins UL82 and UL123. (Microbial infection) Interacts with molluscum contagiosum virus protein MC007. Post-translationally, phosphorylated by CDK6 and CDK4, and subsequently by CDK2 at Ser-567 in G1, thereby releasing E2F1 which is then able to activate cell growth. Dephosphorylated at the late M phase. SV40 large T antigen, HPV E7 and adenovirus E1A bind to the underphosphorylated, active form of pRb. Phosphorylation at Thr-821 and Thr-826 promotes interaction between the C-terminal domain C and the Pocket domain, and thereby inhibits interactions with heterodimeric E2F/DP transcription factor complexes. Dephosphorylated at Ser-795 by calcineruin upon calcium stimulation. CDK3/cyclin-C-mediated phosphorylation at Ser-807 and Ser-811 is required for G0-G1 transition. Phosphorylated by CDK1 and CDK2 upon TGFB1-mediated apoptosis. In terms of processing, N-terminus is methylated by METTL11A/NTM1. Monomethylation at Lys-810 by SMYD2 enhances phosphorylation at Ser-807 and Ser-811, and promotes cell cycle progression. Monomethylation at Lys-860 by SMYD2 promotes interaction with L3MBTL1. Acetylated during keratinocyte differentiation. Acetylation at Lys-873 and Lys-874 regulates subcellular localization. Can be deacetylated by SIRT1. Expressed in the retina. Expressed in foreskin keratinocytes (at protein level).

Its subcellular location is the nucleus. It localises to the cytoplasm. Its function is as follows. Tumor suppressor that is a key regulator of the G1/S transition of the cell cycle. The hypophosphorylated form binds transcription regulators of the E2F family, preventing transcription of E2F-responsive genes. Both physically blocks E2Fs transactivating domain and recruits chromatin-modifying enzymes that actively repress transcription. Cyclin and CDK-dependent phosphorylation of RB1 induces its dissociation from E2Fs, thereby activating transcription of E2F responsive genes and triggering entry into S phase. RB1 also promotes the G0-G1 transition upon phosphorylation and activation by CDK3/cyclin-C. Directly involved in heterochromatin formation by maintaining overall chromatin structure and, in particular, that of constitutive heterochromatin by stabilizing histone methylation. Recruits and targets histone methyltransferases SUV39H1, KMT5B and KMT5C, leading to epigenetic transcriptional repression. Controls histone H4 'Lys-20' trimethylation. Inhibits the intrinsic kinase activity of TAF1. Mediates transcriptional repression by SMARCA4/BRG1 by recruiting a histone deacetylase (HDAC) complex to the c-FOS promoter. In resting neurons, transcription of the c-FOS promoter is inhibited by BRG1-dependent recruitment of a phospho-RB1-HDAC1 repressor complex. Upon calcium influx, RB1 is dephosphorylated by calcineurin, which leads to release of the repressor complex. In terms of biological role, (Microbial infection) In case of viral infections, interactions with SV40 large T antigen, HPV E7 protein or adenovirus E1A protein induce the disassembly of RB1-E2F1 complex thereby disrupting RB1's activity. In Homo sapiens (Human), this protein is Retinoblastoma-associated protein (RB1).